Reading from the N-terminus, the 90-residue chain is DNA-binding protein HU-alpha (90 aa).

Belongs to the bacterial histone-like protein family. Heterodimer of an alpha and a beta chain.

Functionally, histone-like DNA-binding protein which is capable of wrapping DNA to stabilize it, and thus to prevent its denaturation under extreme environmental conditions. This chain is DNA-binding protein HU-alpha (hupA), found in Serratia marcescens.